A 322-amino-acid chain; its full sequence is Cysteine synthase (322 aa).

Residues asparagine 8 and arginine 35 each contribute to the hydrogen sulfide site. Residue lysine 42 is modified to N6-(pyridoxal phosphate)lysine. Residues asparagine 72 and 177-181 (GTGGT) contribute to the pyridoxal 5'-phosphate site. Leucine 269 contacts hydrogen sulfide. Pyridoxal 5'-phosphate is bound at residue serine 273.

It belongs to the cysteine synthase/cystathionine beta-synthase family. Homodimer. Pyridoxal 5'-phosphate is required as a cofactor.

It carries out the reaction O-acetyl-L-serine + hydrogen sulfide = L-cysteine + acetate. The protein operates within amino-acid biosynthesis; L-cysteine biosynthesis; L-cysteine from L-serine: step 2/2. This Buchnera aphidicola subsp. Schizaphis graminum (strain Sg) protein is Cysteine synthase (cysK).